We begin with the raw amino-acid sequence, 333 residues long: Lipoyl synthase (333 aa).

Residues Cys56, Cys61, Cys67, Cys82, Cys86, Cys89, and Ser293 each coordinate [4Fe-4S] cluster. The Radical SAM core domain maps to 68-282; it reads WEDREATFLI…GRVGAELGFS (215 aa). Positions 301–333 are disordered; sequence QQAMTARDQDRSEMSVPPESVSENSHGQRPSPW. A compositionally biased stretch (low complexity) spans 314–325; sequence MSVPPESVSENS.

The protein belongs to the radical SAM superfamily. Lipoyl synthase family. [4Fe-4S] cluster is required as a cofactor.

It is found in the cytoplasm. It catalyses the reaction [[Fe-S] cluster scaffold protein carrying a second [4Fe-4S](2+) cluster] + N(6)-octanoyl-L-lysyl-[protein] + 2 oxidized [2Fe-2S]-[ferredoxin] + 2 S-adenosyl-L-methionine + 4 H(+) = [[Fe-S] cluster scaffold protein] + N(6)-[(R)-dihydrolipoyl]-L-lysyl-[protein] + 4 Fe(3+) + 2 hydrogen sulfide + 2 5'-deoxyadenosine + 2 L-methionine + 2 reduced [2Fe-2S]-[ferredoxin]. It participates in protein modification; protein lipoylation via endogenous pathway; protein N(6)-(lipoyl)lysine from octanoyl-[acyl-carrier-protein]: step 2/2. Its function is as follows. Catalyzes the radical-mediated insertion of two sulfur atoms into the C-6 and C-8 positions of the octanoyl moiety bound to the lipoyl domains of lipoate-dependent enzymes, thereby converting the octanoylated domains into lipoylated derivatives. This chain is Lipoyl synthase, found in Frankia casuarinae (strain DSM 45818 / CECT 9043 / HFP020203 / CcI3).